We begin with the raw amino-acid sequence, 82 residues long: Small ribosomal subunit protein bS18 (82 aa).

This sequence belongs to the bacterial ribosomal protein bS18 family. In terms of assembly, part of the 30S ribosomal subunit. Forms a tight heterodimer with protein bS6.

Binds as a heterodimer with protein bS6 to the central domain of the 16S rRNA, where it helps stabilize the platform of the 30S subunit. This Chlamydia caviae (strain ATCC VR-813 / DSM 19441 / 03DC25 / GPIC) (Chlamydophila caviae) protein is Small ribosomal subunit protein bS18.